The following is a 569-amino-acid chain: Glutamate--tRNA ligase (569 aa).

Residues 110 to 120 (PNPNGPPTLGS) carry the 'HIGH' region motif.

This sequence belongs to the class-I aminoacyl-tRNA synthetase family. Glutamate--tRNA ligase type 2 subfamily.

Its subcellular location is the cytoplasm. It catalyses the reaction tRNA(Glu) + L-glutamate + ATP = L-glutamyl-tRNA(Glu) + AMP + diphosphate. Functionally, catalyzes the attachment of glutamate to tRNA(Glu) in a two-step reaction: glutamate is first activated by ATP to form Glu-AMP and then transferred to the acceptor end of tRNA(Glu). This chain is Glutamate--tRNA ligase, found in Methanococcoides burtonii (strain DSM 6242 / NBRC 107633 / OCM 468 / ACE-M).